Consider the following 227-residue polypeptide: Phosphoglycolate phosphatase (227 aa).

The active-site Nucleophile is the Asp-14. Positions 14, 16, and 177 each coordinate Mg(2+).

The protein belongs to the HAD-like hydrolase superfamily. CbbY/CbbZ/Gph/YieH family. Mg(2+) serves as cofactor.

The catalysed reaction is 2-phosphoglycolate + H2O = glycolate + phosphate. The protein operates within organic acid metabolism; glycolate biosynthesis; glycolate from 2-phosphoglycolate: step 1/1. Specifically catalyzes the dephosphorylation of 2-phosphoglycolate. Is involved in the dissimilation of the intracellular 2-phosphoglycolate formed during the DNA repair of 3'-phosphoglycolate ends, a major class of DNA lesions induced by oxidative stress. The chain is Phosphoglycolate phosphatase from Thiobacillus denitrificans (strain ATCC 25259 / T1).